The chain runs to 219 residues: Predicted GPI-anchored protein 6 (219 aa).

Residues 1 to 19 (MQFQTLLVVAGSLVASTLA) form the signal peptide. N-linked (GlcNAc...) asparagine glycosylation is found at asparagine 21, asparagine 173, and asparagine 188. The GPI-anchor amidated glycine moiety is linked to residue glycine 194. Positions 195–219 (GAVGGASNQITVGFAAIAGLAAILL) are cleaved as a propeptide — removed in mature form.

Belongs to the flocculin family. The GPI-anchor is attached to the protein in the endoplasmic reticulum and serves to target the protein to the cell surface. There, the glucosamine-inositol phospholipid moiety is cleaved off and the GPI-modified mannoprotein is covalently attached via its lipidless GPI glycan remnant to the 1,6-beta-glucan of the outer cell wall layer.

The protein resides in the secreted. The protein localises to the cell wall. It is found in the membrane. Functionally, probable cell wall protein that participates directly in adhesive cell-cell interactions. This Candida albicans (strain SC5314 / ATCC MYA-2876) (Yeast) protein is Predicted GPI-anchored protein 6 (PGA6).